The sequence spans 193 residues: Potassium-transporting ATPase KdpC subunit (193 aa).

The chain crosses the membrane as a helical span at residues 10–30 (AAIIIFSVLTGVIYPALVTVI).

Belongs to the KdpC family. In terms of assembly, the system is composed of three essential subunits: KdpA, KdpB and KdpC.

It is found in the cell membrane. Part of the high-affinity ATP-driven potassium transport (or Kdp) system, which catalyzes the hydrolysis of ATP coupled with the electrogenic transport of potassium into the cytoplasm. This subunit acts as a catalytic chaperone that increases the ATP-binding affinity of the ATP-hydrolyzing subunit KdpB by the formation of a transient KdpB/KdpC/ATP ternary complex. The polypeptide is Potassium-transporting ATPase KdpC subunit (Herpetosiphon aurantiacus (strain ATCC 23779 / DSM 785 / 114-95)).